An 896-amino-acid polypeptide reads, in one-letter code: Protein translocase subunit SecA (896 aa).

ATP is bound by residues Gln87, 105-109 (GEGKT), and Asp512. Disordered stretches follow at residues 565–584 (RRID…PGSS) and 840–896 (EAAQ…AHEA). 4 residues coordinate Zn(2+): Cys876, Cys878, Cys887, and His888. A compositionally biased stretch (basic residues) spans 882–896 (KKYKHCHGNRAAHEA).

This sequence belongs to the SecA family. In terms of assembly, monomer and homodimer. Part of the essential Sec protein translocation apparatus which comprises SecA, SecYEG and auxiliary proteins SecDF-YajC and YidC. It depends on Zn(2+) as a cofactor.

Its subcellular location is the cell inner membrane. The protein resides in the cytoplasm. The enzyme catalyses ATP + H2O + cellular proteinSide 1 = ADP + phosphate + cellular proteinSide 2.. Part of the Sec protein translocase complex. Interacts with the SecYEG preprotein conducting channel. Has a central role in coupling the hydrolysis of ATP to the transfer of proteins into and across the cell membrane, serving both as a receptor for the preprotein-SecB complex and as an ATP-driven molecular motor driving the stepwise translocation of polypeptide chains across the membrane. The chain is Protein translocase subunit SecA from Mannheimia succiniciproducens (strain KCTC 0769BP / MBEL55E).